An 87-amino-acid chain; its full sequence is Phosphoribosyl-ATP pyrophosphatase (87 aa).

It belongs to the PRA-PH family.

The protein localises to the cytoplasm. It carries out the reaction 1-(5-phospho-beta-D-ribosyl)-ATP + H2O = 1-(5-phospho-beta-D-ribosyl)-5'-AMP + diphosphate + H(+). It participates in amino-acid biosynthesis; L-histidine biosynthesis; L-histidine from 5-phospho-alpha-D-ribose 1-diphosphate: step 2/9. This chain is Phosphoribosyl-ATP pyrophosphatase, found in Arthrobacter sp. (strain FB24).